A 199-amino-acid polypeptide reads, in one-letter code: Small ribosomal subunit protein uS5 (199 aa).

A disordered region spans residues 1–28 (MARTPNTDRRQRGGDDQRNRSPRSDERD). Positions 31–94 (FLDKLVHINR…DQAKRTMIKV (64 aa)) constitute an S5 DRBM domain.

The protein belongs to the universal ribosomal protein uS5 family. Part of the 30S ribosomal subunit. Contacts proteins S4 and S8.

In terms of biological role, with S4 and S12 plays an important role in translational accuracy. Located at the back of the 30S subunit body where it stabilizes the conformation of the head with respect to the body. This Rhodospirillum rubrum (strain ATCC 11170 / ATH 1.1.1 / DSM 467 / LMG 4362 / NCIMB 8255 / S1) protein is Small ribosomal subunit protein uS5.